The primary structure comprises 232 residues: 2-C-methyl-D-erythritol 4-phosphate cytidylyltransferase (232 aa).

It belongs to the IspD/TarI cytidylyltransferase family. IspD subfamily.

The catalysed reaction is 2-C-methyl-D-erythritol 4-phosphate + CTP + H(+) = 4-CDP-2-C-methyl-D-erythritol + diphosphate. It participates in isoprenoid biosynthesis; isopentenyl diphosphate biosynthesis via DXP pathway; isopentenyl diphosphate from 1-deoxy-D-xylulose 5-phosphate: step 2/6. Catalyzes the formation of 4-diphosphocytidyl-2-C-methyl-D-erythritol from CTP and 2-C-methyl-D-erythritol 4-phosphate (MEP). This chain is 2-C-methyl-D-erythritol 4-phosphate cytidylyltransferase, found in Synechococcus sp. (strain ATCC 27144 / PCC 6301 / SAUG 1402/1) (Anacystis nidulans).